The primary structure comprises 878 residues: Interleukin-3 receptor class 2 subunit beta (878 aa).

A signal peptide spans 1 to 22 (MDQQMALTWGLCYMALVALCWG). Topologically, residues 23 to 440 (HEVTEEEETV…SNEYTWTTDW (418 aa)) are extracellular. Residues cysteine 39 and cysteine 49 are joined by a disulfide bond. Asparagine 62 carries an N-linked (GlcNAc...) asparagine glycan. Cysteine 78 and cysteine 95 form a disulfide bridge. The region spanning 139 to 244 (PPKDIHISPS…PEVHWDSQPG (106 aa)) is the Fibronectin type-III 1 domain. The interval 223–244 (GSSLSGRPSRWSPEVHWDSQPG) is disordered. 2 disulfide bridges follow: cysteine 254/cysteine 264 and cysteine 293/cysteine 310. The 96-residue stretch at 343 to 438 (QMEPPILNQT…EWSNEYTWTT (96 aa)) folds into the Fibronectin type-III 2 domain. An N-linked (GlcNAc...) asparagine glycan is attached at asparagine 350. The WSXWS motif motif lies at 427 to 431 (WSEWS). The helical transmembrane segment at 441–462 (VMPTLWIVLILVFLIFTLLLAL) threads the bilayer. The Cytoplasmic segment spans residues 463–878 (HFGRVYGYRT…AIQFFKSLKY (416 aa)). The Box 1 motif motif lies at 476 to 484 (WKEKIPNPS). 2 disordered regions span residues 539–620 (LTIE…GGSL) and 660–709 (SSLE…MASD). Positions 554 to 570 (PDTTPAASSESTEQLPN) are enriched in polar residues. Over residues 671-689 (EPKENPPVELSVEKQEARD) the composition is skewed to basic and acidic residues. Serine 752 and serine 754 each carry phosphoserine. Tyrosine 765 carries the post-translational modification Phosphotyrosine. 2 disordered regions span residues 771 to 810 (SVSQAATSPPGHPAPPVASSPTVIPGEPREEVGPASPHPE) and 829 to 849 (PGSLSPHSKPPSPSLCSETED).

It belongs to the type I cytokine receptor family. Type 4 subfamily. In terms of assembly, heterodimer of an alpha and a beta subunit.

Its subcellular location is the membrane. Functionally, in mouse, there are two classes of high-affinity IL3 receptors. One contains this IL3-specific beta subunit and the other contains the beta subunit also shared by high-affinity IL5 and GM-CSF receptors. The sequence is that of Interleukin-3 receptor class 2 subunit beta (Csf2rb2) from Mus musculus (Mouse).